The primary structure comprises 292 residues: Protease HtpX homolog (292 aa).

2 helical membrane passes run 7–27 (TFIL…LIGG) and 29–49 (GGAV…WWNS). His131 lines the Zn(2+) pocket. The active site involves Glu132. A Zn(2+)-binding site is contributed by His135. 2 consecutive transmembrane segments (helical) span residues 148-168 (ATMA…SMFG) and 178-198 (LAAI…QMAI). Glu203 provides a ligand contact to Zn(2+).

It belongs to the peptidase M48B family. The cofactor is Zn(2+).

The protein resides in the cell inner membrane. The protein is Protease HtpX homolog of Paracoccus denitrificans (strain Pd 1222).